A 182-amino-acid polypeptide reads, in one-letter code: Adenine phosphoribosyltransferase (182 aa).

The protein belongs to the purine/pyrimidine phosphoribosyltransferase family. In terms of assembly, homodimer.

Its subcellular location is the cytoplasm. It carries out the reaction AMP + diphosphate = 5-phospho-alpha-D-ribose 1-diphosphate + adenine. It participates in purine metabolism; AMP biosynthesis via salvage pathway; AMP from adenine: step 1/1. Its function is as follows. Catalyzes a salvage reaction resulting in the formation of AMP, that is energically less costly than de novo synthesis. The polypeptide is Adenine phosphoribosyltransferase (Pseudomonas fluorescens (strain SBW25)).